A 901-amino-acid chain; its full sequence is Serine/threonine-protein kinase-like protein CR4 (901 aa).

The first 22 residues, 1 to 22, serve as a signal peptide directing secretion; it reads MDIVPVVALCCCLVLLPSWAYG. 7 tandem repeats follow at residues 31–66, 70–105, 123–158, 160–193, 201–234, 251–285, and 290–328. Positions 31 to 328 are 7 X 36 AA repeats; the sequence is VSYGEDGPVF…PLALPMAVSP (298 aa). 2 N-linked (GlcNAc...) asparagine glycosylation sites follow: asparagine 149 and asparagine 177. Residue asparagine 280 is glycosylated (N-linked (GlcNAc...) asparagine). A TNFR-Cys repeat occupies 335–389; sequence SCSHGYYEYANHGEVGSGSKTCKPANSRLCLPCSVGCPDDSYESSPCNATADRVC. Intrachain disulfides connect cysteine 336-cysteine 364, cysteine 367-cysteine 381, and cysteine 371-cysteine 389. Asparagine 382 carries N-linked (GlcNAc...) asparagine glycosylation. A helical transmembrane segment spans residues 423 to 443; the sequence is IFVAEIAFAVILVFSVTAIAC. The region spanning 504–781 is the Protein kinase domain; sequence FSEDSQVGKG…KVTTALERAL (278 aa). ATP contacts are provided by residues 510-518 and lysine 532; that span reads VGKGSFSCV. Aspartate 633 (proton acceptor) is an active-site residue. The tract at residues 845-901 is disordered; it reads VTSSQRRKSSASEADMDGRTTTDGRNVGSSIGDGLRSLEEEISPASPQENLYLQHNF. Residues 889-901 show a composition bias toward polar residues; sequence ASPQENLYLQHNF.

This sequence belongs to the protein kinase superfamily. Ser/Thr protein kinase family. In terms of assembly, homodimer. Autophosphorylated. Specifically expressed in the epidermal cells of paleas and lemmas.

It localises to the cell membrane. The protein localises to the endosome. The protein resides in the multivesicular body membrane. The enzyme catalyses L-seryl-[protein] + ATP = O-phospho-L-seryl-[protein] + ADP + H(+). It carries out the reaction L-threonyl-[protein] + ATP = O-phospho-L-threonyl-[protein] + ADP + H(+). Receptor protein kinase. Could play a role in a differentiation signal. Controls formative cell division in meristems. Regulates epidermal cell differentiation in many organs. During floral organogenesis, required to maintain the interlocking of the palea and lemma, and fertility. Triggers culm elongation. The polypeptide is Serine/threonine-protein kinase-like protein CR4 (Oryza sativa subsp. japonica (Rice)).